The following is a 251-amino-acid chain: Triosephosphate isomerase (251 aa).

Substrate is bound at residue 9 to 11 (NWK). The active-site Electrophile is His95. The active-site Proton acceptor is Glu167. Residues Gly173, Ser213, and 234-235 (GG) each bind substrate. At Ser213 the chain carries Phosphoserine.

It belongs to the triosephosphate isomerase family. As to quaternary structure, homodimer.

The protein resides in the cytoplasm. The catalysed reaction is D-glyceraldehyde 3-phosphate = dihydroxyacetone phosphate. It functions in the pathway carbohydrate biosynthesis; gluconeogenesis. The protein operates within carbohydrate degradation; glycolysis; D-glyceraldehyde 3-phosphate from glycerone phosphate: step 1/1. In terms of biological role, involved in the gluconeogenesis. Catalyzes stereospecifically the conversion of dihydroxyacetone phosphate (DHAP) to D-glyceraldehyde-3-phosphate (G3P). The sequence is that of Triosephosphate isomerase from Bacillus cereus (strain G9842).